The sequence spans 934 residues: Protein unc-45 homolog B (934 aa).

TPR repeat units lie at residues 9–42 (SVQL…CKKE), 48–81 (AVIY…DAAD), and 83–115 (KALY…EPKN). 3 ARM repeats span residues 174 to 213 (DAGA…GMCT), 216 to 255 (RARA…CVND), and 753 to 792 (DKLR…NLVC).

As to quaternary structure, interacts with apobec2a, apobec2b, hsp90a.1, hsp90a.2, hsp90ab1 and myosin. In terms of tissue distribution, expressed in striated muscle tissue including somites, heart and craniofacial muscle. Detected in mesoderm adjacent to the dorsal midline during the late gastrula stages and in somitic mesoderm during development of trunk skeletal muscle. Also expressed in cranial skeletal muscle and in cardiac and smooth muscle. Detected in somitic muscle and heart primordium of 24 hour embryos. At later stages, expressed in muscles of pectoral fins, jaw, branchial arches and eye.

The protein resides in the cytoplasm. It localises to the myofibril. The protein localises to the sarcomere. Its subcellular location is the z line. It is found in the a band. The protein resides in the perinuclear region. Functionally, acts as a co-chaperone for HSP90 and is required for proper folding of the myosin motor domain. Plays a role in sarcomere formation during muscle cell development. Required for myoseptal integrity, myofiber attachment, motility and craniofacial development. Is necessary for normal early lens development. This is Protein unc-45 homolog B from Danio rerio (Zebrafish).